We begin with the raw amino-acid sequence, 876 residues long: Alanine--tRNA ligase (876 aa).

The interval S2–Y461 is catalytic. K74 is modified (N6-acetyllysine). The segment at D553–A705 is editing. The Zn(2+) site is built by H564, H568, C666, and H670. The tract at residues T699–V808 is important for oligomerization. Residues I766–L875 form a C-Ala domain region.

The protein belongs to the class-II aminoacyl-tRNA synthetase family. In terms of assembly, homotetramer. Requires Zn(2+) as cofactor.

It is found in the cytoplasm. The enzyme catalyses tRNA(Ala) + L-alanine + ATP = L-alanyl-tRNA(Ala) + AMP + diphosphate. It carries out the reaction (S)-lactate + ATP + H(+) = (S)-lactoyl-AMP + diphosphate. It catalyses the reaction (S)-lactoyl-AMP + L-lysyl-[protein] = N(6)-[(S)-lactoyl]-L-lysyl-[protein] + AMP + 2 H(+). Its activity is regulated as follows. Acetylation at Lys-74 decreases the alanylation activity for tRNA(Ala); a protein that is fully acetylated is inactive in vitro. Functionally, catalyzes the attachment of L-alanine to tRNA(Ala) in a two-step reaction: L-alanine is first activated by ATP to form Ala-AMP and then transferred to the acceptor end of tRNA(Ala). AlaRS also incorrectly activates the sterically smaller amino acid glycine as well as the sterically larger amino acid L-serine; generates 2-fold more mischarged Gly than Ser. These mischarged amino acids occur because the of inherent physicochemical limitations on discrimination between closely related amino acids (Ala, Gly and Ser) in the charging step. In presence of high levels of lactate, also acts as a protein lactyltransferase that mediates lactylation of lysine residues in target proteins. Edits mischarged Ser-tRNA(Ala) and Gly-tRNA(Ala) but not incorrectly charged Ser-tRNA(Thr). Dtd edits Gly-tRNA(Ala) 4-fold better than does AlaRS. Its function is as follows. Attaches Ala to transfer-messenger RNA (tmRNA, also known as 10Sa RNA, the product of the ssrA gene). tmRNA plays a major role in rescue of stalled ribosomes via trans-translation. The sequence is that of Alanine--tRNA ligase (alaS) from Escherichia coli (strain K12).